A 314-amino-acid chain; its full sequence is tRNA pseudouridine synthase B (314 aa).

His-43 contributes to the substrate binding site. Asp-48 acts as the Nucleophile in catalysis. Positions 76, 179, and 200 each coordinate substrate.

The protein belongs to the pseudouridine synthase TruB family. Type 1 subfamily.

It catalyses the reaction uridine(55) in tRNA = pseudouridine(55) in tRNA. Its function is as follows. Responsible for synthesis of pseudouridine from uracil-55 in the psi GC loop of transfer RNAs. The polypeptide is tRNA pseudouridine synthase B (Escherichia coli O139:H28 (strain E24377A / ETEC)).